The sequence spans 490 residues: Arginine decarboxylase (490 aa).

Residue Lys-226 is modified to N6-(pyridoxal phosphate)lysine.

The protein belongs to the Orn/Lys/Arg decarboxylase class-I family. Pyridoxal 5'-phosphate serves as cofactor.

Its subcellular location is the cytoplasm. It carries out the reaction L-arginine + H(+) = agmatine + CO2. It participates in amine and polyamine biosynthesis; agmatine biosynthesis; agmatine from L-arginine: step 1/1. Catalyzes the formation of agmatine from arginine. In Bacillus subtilis (strain 168), this protein is Arginine decarboxylase (speA).